A 604-amino-acid polypeptide reads, in one-letter code: Inactive all-trans-retinol 13,14-reductase (604 aa).

The first 17 residues, 1 to 17, serve as a signal peptide directing secretion; it reads MWWILLFLEWFVDWARG.

This sequence belongs to the carotenoid/retinoid oxidoreductase family. CrtISO subfamily.

This Danio rerio (Zebrafish) protein is Inactive all-trans-retinol 13,14-reductase (retsatl).